Reading from the N-terminus, the 875-residue chain is Serrate RNA effector molecule homolog (875 aa).

A disordered region spans residues 1 to 90 (MGDSDDEYDR…RRDWDEHSSD (90 aa)). Glycine 2 carries the N-acetylglycine modification. Residue serine 4 is modified to Phosphoserine. Tyrosine 8 is modified (phosphotyrosine). Over residues 8–73 (YDRRRRDKFR…ERFSPPRHEL (66 aa)) the composition is skewed to basic and acidic residues. Residues serine 67, serine 74, and serine 136 each carry the phosphoserine modification. Residue lysine 150 forms a Glycyl lysine isopeptide (Lys-Gly) (interchain with G-Cter in SUMO2) linkage. A disordered region spans residues 272–411 (EEEEQAGKTG…KPKDAAGLEC (140 aa)). Over residues 297-345 (EGERKANDKDEKKEDGKQAENDSSNDDKTKKSEGDGDKEEKKEEAEKEA) the composition is skewed to basic and acidic residues. Residues 369-386 (SESESEGGQAEEEKEEAE) are compositionally biased toward acidic residues. Positions 387–411 (EALKEKEKPKEEEKEKPKDAAGLEC) are enriched in basic and acidic residues. 2 positions are modified to phosphoserine: serine 492 and serine 539. At threonine 543 the chain carries Phosphothreonine. The residue at position 569 (serine 569) is a Phosphoserine. The interval 571 to 597 (EEEELLGSSGGPPPEEPPKEGNPAEIN) is disordered. Position 670 is a phosphothreonine (threonine 670). Serine 678 carries the phosphoserine modification. Arginine 832, arginine 839, and arginine 849 each carry omega-N-methylarginine. The tract at residues 834–853 (NYDAFRGQGGYPGKPRNRMV) is disordered.

The protein belongs to the ARS2 family. In terms of assembly, interacts with CASP8AP2 and ERBB4. Interacts with NCBP1/CBP80 and DROSHA. Interacts with LUZP4. Interacts with NCBP2/CBP20 and NCBP3. Interacts with MTREX. As to expression, widely expressed, with a preference for proliferating cells. Highly expressed in hematopoietic tissues and reduced or absent expression in parenchymal organs like liver and kidney. In the brain, expressed in the subventricular zone by niche astrocytes, ependymal cells and neural stem cells. In this cerebral context, expressed in slowly dividing cells.

The protein resides in the nucleus. It is found in the nucleoplasm. It localises to the cytoplasm. Acts as a mediator between the cap-binding complex (CBC) and the primary microRNAs (miRNAs) processing machinery during cell proliferation. Contributes to the stability and delivery of capped primary miRNA transcripts to the primary miRNA processing complex containing DGCR8 and DROSHA, thereby playing a role in RNA-mediated gene silencing (RNAi) by miRNAs. Binds capped RNAs (m7GpppG-capped RNA); however interaction is probably mediated via its interaction with NCBP1/CBP80 component of the CBC complex. Involved in cell cycle progression at S phase. Does not directly confer arsenite resistance but rather modulates arsenic sensitivity. Independently of its activity on miRNAs, necessary and sufficient to promote neural stem cell self-renewal. Does so by directly binding SOX2 promoter and positively regulating its transcription. The polypeptide is Serrate RNA effector molecule homolog (Srrt) (Mus musculus (Mouse)).